A 52-amino-acid chain; its full sequence is Large ribosomal subunit protein bL33 (52 aa).

It belongs to the bacterial ribosomal protein bL33 family.

The polypeptide is Large ribosomal subunit protein bL33 (Anaeromyxobacter sp. (strain Fw109-5)).